Consider the following 486-residue polypeptide: Mitogen-activated protein kinase 17 (486 aa).

One can recognise a Protein kinase domain in the interval 16–307; it reads YQIQEVVGKG…AEEALADPYF (292 aa). Residues 22 to 30 and K45 contribute to the ATP site; that span reads VGKGSYGVV. The Proton acceptor role is filled by D142. Phosphothreonine is present on T178. The TXY motif lies at 178–180; sequence TDY. Y180 is subject to Phosphotyrosine. At T183 the chain carries Phosphothreonine. Positions 386–455 are disordered; the sequence is EEHNDDEEEH…LSSQKASQVD (70 aa). Low complexity predominate over residues 422 to 433; the sequence is SVHAQSSSASVV. The segment covering 440 to 452 has biased composition (polar residues); the sequence is PNTATGLSSQKAS.

Belongs to the protein kinase superfamily. CMGC Ser/Thr protein kinase family. MAP kinase subfamily. Dually phosphorylated on Thr-178 and Tyr-180, which activates the enzyme.

It catalyses the reaction L-seryl-[protein] + ATP = O-phospho-L-seryl-[protein] + ADP + H(+). The enzyme catalyses L-threonyl-[protein] + ATP = O-phospho-L-threonyl-[protein] + ADP + H(+). Its activity is regulated as follows. Activated by threonine and tyrosine phosphorylation. This chain is Mitogen-activated protein kinase 17 (MPK17), found in Arabidopsis thaliana (Mouse-ear cress).